A 663-amino-acid chain; its full sequence is tRNA (guanine(26)-N(2))-dimethyltransferase (663 aa).

The N-terminal 16 residues, 1 to 16 (MSLARTILWLSRPLRP), are a transit peptide targeting the mitochondrion. Residues 56–498 (ATVTEGAAKI…APPEALWDIM (443 aa)) enclose the Trm1 methyltransferase domain. Arginine 83 provides a ligand contact to S-adenosyl-L-methionine. Residue serine 121 is modified to Phosphoserine. Arginine 165 and aspartate 183 together coordinate S-adenosyl-L-methionine. Residues cysteine 347, cysteine 350, cysteine 383, and cysteine 386 each contribute to the Zn(2+) site. Serine 516 carries the post-translational modification Phosphoserine. Residues 534–574 (IREDANPSSRQRGLKRFQANPEANWGPRPRARPGGKAASED) form a disordered region. The Nuclear localization signal motif lies at 540 to 572 (PSSRQRGLKRFQANPEANWGPRPRARPGGKAAS). A C3H1-type zinc finger spans residues 599–626 (RLKTFPCKRFKEGTCQLGDQCCYSHSPA). Residue serine 624 is modified to Phosphoserine. The disordered stretch occupies residues 632 to 663 (GDIPIEECPETTTKISPGPKAAAGGIPGPGVD).

This sequence belongs to the class I-like SAM-binding methyltransferase superfamily. Trm1 family.

The protein resides in the mitochondrion. It is found in the nucleus. Its subcellular location is the cytoplasm. The catalysed reaction is guanosine(26) in tRNA + 2 S-adenosyl-L-methionine = N(2)-dimethylguanosine(26) in tRNA + 2 S-adenosyl-L-homocysteine + 2 H(+). Its function is as follows. Dimethylates a single guanine residue at position 26 of most nuclear- and mitochondrial-encoded tRNAs using S-adenosyl-L-methionine as donor of the methyl groups. tRNA guanine(26)-dimethylation is required for redox homeostasis and ensure proper cellular proliferation and oxidative stress survival. This chain is tRNA (guanine(26)-N(2))-dimethyltransferase, found in Mus musculus (Mouse).